Reading from the N-terminus, the 75-residue chain is Translational regulator CsrA (75 aa).

Belongs to the CsrA/RsmA family. In terms of assembly, homodimer; the beta-strands of each monomer intercalate to form a hydrophobic core, while the alpha-helices form wings that extend away from the core.

The protein localises to the cytoplasm. In terms of biological role, a translational regulator that binds mRNA to regulate translation initiation and/or mRNA stability. Usually binds in the 5'-UTR at or near the Shine-Dalgarno sequence preventing ribosome-binding, thus repressing translation. Its main target seems to be the major flagellin gene, while its function is anatagonized by FliW. The protein is Translational regulator CsrA of Thermosipho melanesiensis (strain DSM 12029 / CIP 104789 / BI429).